A 126-amino-acid polypeptide reads, in one-letter code: Large ribosomal subunit protein bL19 (126 aa).

Belongs to the bacterial ribosomal protein bL19 family.

In terms of biological role, this protein is located at the 30S-50S ribosomal subunit interface and may play a role in the structure and function of the aminoacyl-tRNA binding site. The protein is Large ribosomal subunit protein bL19 of Dechloromonas aromatica (strain RCB).